We begin with the raw amino-acid sequence, 318 residues long: uncharacterized protein (318 aa).

4 helical membrane-spanning segments follow: residues 112–132 (VIGV…PVFL), 147–167 (IAIE…FLSM), 209–229 (CGSS…LLVP), and 237–257 (VIDR…VLQL).

The protein localises to the cell membrane. This is an uncharacterized protein from Bacillus subtilis (strain 168).